Here is a 92-residue protein sequence, read N- to C-terminus: uncharacterized protein (92 aa).

The next 3 membrane-spanning stretches (helical) occupy residues 1–21 (MEVL…GVIL), 29–49 (IIML…CYYL), and 51–71 (IAIV…LGYL).

The protein localises to the cell membrane. This is an uncharacterized protein from Methanocaldococcus jannaschii (strain ATCC 43067 / DSM 2661 / JAL-1 / JCM 10045 / NBRC 100440) (Methanococcus jannaschii).